We begin with the raw amino-acid sequence, 95 residues long: Ferredoxin-like protein FixX (95 aa).

The protein belongs to the bacterial-type ferredoxin family. FixX subfamily.

In terms of biological role, could be part of an electron transfer system required for anaerobic carnitine reduction. Could be a 3Fe-4S cluster-containing protein. In Salmonella typhimurium (strain LT2 / SGSC1412 / ATCC 700720), this protein is Ferredoxin-like protein FixX (fixX).